The primary structure comprises 404 residues: MLKYEYILVRYGEMTTKGKNRSKFVSTLKDNVKFKLKKFPNIKIDATHDRMYIQLNGEDHEAVSERLKDVFGIHKFNLAMKVPSELEDIKEGALAAFLQVKGDVKTFKITVHRSYKRFPMRTMELLPEIGGHILENTEDITVDVHNPDVNVRVEIRSGYSYIMCDERMGAGGLPVGVGGKVMVLLSGGIDSPVAAYLTMKRGVSVEAVHFHSPPFTSERAKQKVIDLAQELTKYCKRVTLHLVPFTEVQKTINKEIPSSYSMTVMRRMMMRITERIAEERNALAITTGESLGQVASQTLDSMHTINEVTNYPVIRPLITMDKLEIIKIAEEIGTYDISIRPYEDCCTVFTPASPATKPKREKANRFEAKYDFTPLIDEAVANKETMVLQTVEVVAEEEKFEELF.

The region spanning 61–166 is the THUMP domain; it reads EAVSERLKDV…SGYSYIMCDE (106 aa). Residues 184–185, 209–210, arginine 266, glycine 288, and glutamine 297 contribute to the ATP site; these read LL and HF.

This sequence belongs to the ThiI family.

Its subcellular location is the cytoplasm. It carries out the reaction [ThiI sulfur-carrier protein]-S-sulfanyl-L-cysteine + a uridine in tRNA + 2 reduced [2Fe-2S]-[ferredoxin] + ATP + H(+) = [ThiI sulfur-carrier protein]-L-cysteine + a 4-thiouridine in tRNA + 2 oxidized [2Fe-2S]-[ferredoxin] + AMP + diphosphate. It catalyses the reaction [ThiS sulfur-carrier protein]-C-terminal Gly-Gly-AMP + S-sulfanyl-L-cysteinyl-[cysteine desulfurase] + AH2 = [ThiS sulfur-carrier protein]-C-terminal-Gly-aminoethanethioate + L-cysteinyl-[cysteine desulfurase] + A + AMP + 2 H(+). The protein operates within cofactor biosynthesis; thiamine diphosphate biosynthesis. In terms of biological role, catalyzes the ATP-dependent transfer of a sulfur to tRNA to produce 4-thiouridine in position 8 of tRNAs, which functions as a near-UV photosensor. Also catalyzes the transfer of sulfur to the sulfur carrier protein ThiS, forming ThiS-thiocarboxylate. This is a step in the synthesis of thiazole, in the thiamine biosynthesis pathway. The sulfur is donated as persulfide by IscS. The polypeptide is Probable tRNA sulfurtransferase (Bacillus cereus (strain ATCC 14579 / DSM 31 / CCUG 7414 / JCM 2152 / NBRC 15305 / NCIMB 9373 / NCTC 2599 / NRRL B-3711)).